Consider the following 293-residue polypeptide: GTP cyclohydrolase FolE2 (293 aa).

Belongs to the GTP cyclohydrolase IV family.

The enzyme catalyses GTP + H2O = 7,8-dihydroneopterin 3'-triphosphate + formate + H(+). The protein operates within cofactor biosynthesis; 7,8-dihydroneopterin triphosphate biosynthesis; 7,8-dihydroneopterin triphosphate from GTP: step 1/1. Functionally, converts GTP to 7,8-dihydroneopterin triphosphate. The polypeptide is GTP cyclohydrolase FolE2 (Pseudomonas entomophila (strain L48)).